A 258-amino-acid chain; its full sequence is Redox-sensing transcriptional repressor Rex (258 aa).

Positions 26 to 65 form a DNA-binding region, H-T-H motif; it reads LYLRALTALSERSVPTVSSEELAAAAGVNSAKLRKDFSYL. NAD(+) is bound at residue 100–105; that stretch reads GIGNLG. A disordered region spans residues 219-258; that stretch reads AGEEAAADGAAPPVAARKQQRSTGSADQGPDGDVPAVMPA. Over residues 225 to 234 the composition is skewed to low complexity; the sequence is ADGAAPPVAA.

This sequence belongs to the transcriptional regulatory Rex family. As to quaternary structure, homodimer.

It localises to the cytoplasm. Its function is as follows. Modulates transcription of respiratory genes in response to changes in cellular NADH/NAD(+) redox state. Binds to the DNA sequence motif 5'-TGTGAACGCGTTCACA-3' in the promoter of the cydABCD operon. May play a general role as a sensor of cellular redox balance. The polypeptide is Redox-sensing transcriptional repressor Rex (Streptomyces coelicolor (strain ATCC BAA-471 / A3(2) / M145)).